We begin with the raw amino-acid sequence, 413 residues long: Ribulose bisphosphate carboxylase large chain (413 aa).

Asn100 and Thr150 together coordinate substrate. The active-site Proton acceptor is Lys152. Residue Lys154 coordinates substrate. Lys178, Asp180, and Glu181 together coordinate Mg(2+). The residue at position 178 (Lys178) is an N6-carboxylysine. The active-site Proton acceptor is the His271. Residues Arg272, His304, and Ser356 each coordinate substrate.

Belongs to the RuBisCO large chain family. Type I subfamily. In terms of assembly, heterohexadecamer of 8 large chains and 8 small chains; disulfide-linked. The disulfide link is formed within the large subunit homodimers. The cofactor is Mg(2+). In terms of processing, the disulfide bond which can form in the large chain dimeric partners within the hexadecamer appears to be associated with oxidative stress and protein turnover.

Its subcellular location is the plastid. The protein resides in the chloroplast. The enzyme catalyses 2 (2R)-3-phosphoglycerate + 2 H(+) = D-ribulose 1,5-bisphosphate + CO2 + H2O. The catalysed reaction is D-ribulose 1,5-bisphosphate + O2 = 2-phosphoglycolate + (2R)-3-phosphoglycerate + 2 H(+). In terms of biological role, ruBisCO catalyzes two reactions: the carboxylation of D-ribulose 1,5-bisphosphate, the primary event in carbon dioxide fixation, as well as the oxidative fragmentation of the pentose substrate in the photorespiration process. Both reactions occur simultaneously and in competition at the same active site. In Adiantum pedatum (Northern maidenhair fern), this protein is Ribulose bisphosphate carboxylase large chain (rbcL).